The primary structure comprises 901 residues: Protein translocase subunit SecA (901 aa).

Residues Q87, 105 to 109 (GEGKT), and D512 each bind ATP. Residues C885, C887, C896, and H897 each contribute to the Zn(2+) site.

Belongs to the SecA family. In terms of assembly, monomer and homodimer. Part of the essential Sec protein translocation apparatus which comprises SecA, SecYEG and auxiliary proteins SecDF-YajC and YidC. It depends on Zn(2+) as a cofactor.

The protein resides in the cell inner membrane. It is found in the cytoplasm. It carries out the reaction ATP + H2O + cellular proteinSide 1 = ADP + phosphate + cellular proteinSide 2.. Part of the Sec protein translocase complex. Interacts with the SecYEG preprotein conducting channel. Has a central role in coupling the hydrolysis of ATP to the transfer of proteins into and across the cell membrane, serving both as a receptor for the preprotein-SecB complex and as an ATP-driven molecular motor driving the stepwise translocation of polypeptide chains across the membrane. This is Protein translocase subunit SecA from Salmonella schwarzengrund (strain CVM19633).